Reading from the N-terminus, the 150-residue chain is Catabolic 3-dehydroquinase 2 (150 aa).

Tyrosine 23 serves as the catalytic Proton acceptor. Substrate is bound by residues asparagine 74, histidine 80, and aspartate 87. The Proton donor role is filled by histidine 100. Residues 101 to 102 and arginine 111 each bind substrate; that span reads IT.

Belongs to the type-II 3-dehydroquinase family. In terms of assembly, homododecamer. Adopts a ring-like structure, composed of an arrangement of two hexameric rings stacked on top of one another.

The enzyme catalyses 3-dehydroquinate = 3-dehydroshikimate + H2O. The protein operates within aromatic compound metabolism; 3,4-dihydroxybenzoate biosynthesis; 3,4-dihydroxybenzoate from 3-dehydroquinate: step 1/2. In terms of biological role, is involved in the catabolism of quinate. Allows the utilization of quinate as carbon source via the beta-ketoadipate pathway. This is Catabolic 3-dehydroquinase 2 from Neosartorya fischeri (strain ATCC 1020 / DSM 3700 / CBS 544.65 / FGSC A1164 / JCM 1740 / NRRL 181 / WB 181) (Aspergillus fischerianus).